Here is a 393-residue protein sequence, read N- to C-terminus: Flavohemoprotein (393 aa).

The Globin domain maps to 1-139 (MLSNAQRALI…LADLLIEAEE (139 aa)). Histidine 85 provides a ligand contact to heme b. Active-site charge relay system residues include tyrosine 95 and glutamate 138. The segment at 150 to 393 (GGWRGVRRFR…FFGPAAALDA (244 aa)) is reductase. Residues 153-256 (RGVRRFRVAR…FPPAGDFVLR (104 aa)) enclose the FAD-binding FR-type domain. FAD is bound by residues tyrosine 191 and 205-208 (RNYS). 268 to 273 (GVGITP) contributes to the NADP(+) binding site. Position 384–387 (384–387 (FFGP)) interacts with FAD.

This sequence belongs to the globin family. Two-domain flavohemoproteins subfamily. The protein in the C-terminal section; belongs to the flavoprotein pyridine nucleotide cytochrome reductase family. The cofactor is heme b. FAD is required as a cofactor.

The catalysed reaction is 2 nitric oxide + NADPH + 2 O2 = 2 nitrate + NADP(+) + H(+). The enzyme catalyses 2 nitric oxide + NADH + 2 O2 = 2 nitrate + NAD(+) + H(+). Its function is as follows. Is involved in NO detoxification in an aerobic process, termed nitric oxide dioxygenase (NOD) reaction that utilizes O(2) and NAD(P)H to convert NO to nitrate, which protects the bacterium from various noxious nitrogen compounds. Therefore, plays a central role in the inducible response to nitrosative stress. The polypeptide is Flavohemoprotein (Pseudomonas aeruginosa (strain ATCC 15692 / DSM 22644 / CIP 104116 / JCM 14847 / LMG 12228 / 1C / PRS 101 / PAO1)).